The chain runs to 576 residues: MNIFNQLKQDIIVASRQLYNNQEIANTATIEIPKDSFNGDLSSNVAMIIAAKESIAPREVALKFKEVLITLPYIASIEIAGPGFINFTIKADSWQASIKDILQHEEKFFEIDIDKSRNINIEYVSANPTGPMHIGHARGAVYGDVLARILQKVSYSVTKEYYVNDAGSQINDLVSTVLLRYKEALGEQITIPAGLYPGEYLIPLGQILAKEYGNKLLTMNYAERFKIVKSFAVEKMLDLNRKDLADLGIKHDIFFSEQSLHDKGEIEETVKLLERMGLIYEGTLPAPKGKIHEEWDNRVQKLFKSTKYGDSQDRPIEKADGSWSYFASDLAYAKDKIERGANHLIYVLGADHSGYVKRIEAIVKALGKEQVKVDVKICQLVNFVENGVPVKMSKRLGNFASVQDVNHEVGKDIIRFMMLTRQNDKPLDFDLVKVKEQSRENPIFYVQYAHVRTISILSKARELIPESYNNFESGKYDLSLLSSEEEIEIIKLLASWTKTLEASAKYFEPHRIAFYLINLASKFHSMWNFGKENSDYRFVIESNKELTLARLALASAIQKVIASGLEVIGVEPMNKM.

The 'HIGH' region signature appears at 126 to 136 (ANPTGPMHIGH).

Belongs to the class-I aminoacyl-tRNA synthetase family. As to quaternary structure, monomer.

Its subcellular location is the cytoplasm. It carries out the reaction tRNA(Arg) + L-arginine + ATP = L-arginyl-tRNA(Arg) + AMP + diphosphate. In Rickettsia peacockii (strain Rustic), this protein is Arginine--tRNA ligase.